We begin with the raw amino-acid sequence, 299 residues long: MKTNMLTNNCKDKIFIKKSHTILRLLYFFKSLAMILFFIFFSLTSYAKPKIVVSITPISSILAMLVKDKVDIESLAVNNECPHHHNIKPSDITKVRNADMVIYINEQFDGFTEKLISNNNQNIIKISDIKSLTTIKNNWHIWLDLNNAKILLQEFAQIFIKNFPQLQKEINNNLPIALKELNKLQDIKNNEFRTIKDIILLSDSSEYFFLNTNIKTAKLYRESQKSLRYISKLEELIKGSNNKCIVLSNKQKSQLYTKLNAKTKIIILNSENWNVKNINSNTFQDQYLQMINQVKKCIH.

The helical transmembrane segment at 25–45 (LLYFFKSLAMILFFIFFSLTS) threads the bilayer.

Its subcellular location is the membrane. This is an uncharacterized protein from Rickettsia prowazekii (strain Madrid E).